The primary structure comprises 324 residues: Short chain dehydrogenase/reductase dmxR8 (324 aa).

Residues Leu33, Lys58, Asp83, and Asn110 each contribute to the NADP(+) site. Residue Ser163 is the Proton donor of the active site. 2 residues coordinate NADP(+): Tyr200 and Lys204. The active-site Proton acceptor is the Tyr200. Lys204 (lowers pKa of active site Tyr) is an active-site residue.

The protein belongs to the short-chain dehydrogenases/reductases (SDR) family.

The protein operates within secondary metabolite biosynthesis. Functionally, short chain dehydrogenase; part of the gene cluster that mediates the biosynthesis of the dimeric xanthones cryptosporioptides. The pathway begins with the synthesis of atrochrysone thioester by the polyketide synthase dmx-nrPKS. The atrochrysone carboxyl ACP thioesterase dmxR1 then breaks the thioester bond and releases the atrochrysone carboxylic acid from dmx-nrPKS. Atrochrysone carboxylic acid is decarboxylated by the decarboxylase dmxR15, and oxidized by the anthrone oxygenase dmxR16 to yield emodin. Emodin is then reduced to emodin hydroquinone by the oxidoreductase dmxR7. A-ring reduction by the short chain dehydrogenase dmxR18, dehydration by the scytalone dehydratase-like protein dmxR17 and probable spontaneous re-oxidation, results in overall deoxygenation to chrysophanol. Baeyer-Villiger oxidation by the Baeyer-Villiger monooxygenase (BVMO) dmxR6 then yields monodictylactone in equilibrium with monodictyphenone. In the case of the cryptosporioptides biosynthesis, monodictylactone is reduced at C-12 to an alcohol (by the short chain dehydrogenases dmxR12 or dmxR8) and hydroxylated at C-5 by dmxR9, yielding the electron-rich aromatic which could eliminate H(2)O to form the ortho-quinonemethide, followed by tautomerisation to paraquinone and complete the formal reduction to produce the 10-methylgroup. Conjugate addition of C-4a-OH to the resulting paraquinone by the monooxygenase dmxR10 then gives cyclohexadienone, which is then reduced at C-5 by the short chain dehydrogenase dmxR3 to give the dihydroxanthone. The 6,7-epoxide in the cryptosporioptides could be introduced by the cytochrome P450 monooxygenase dmxL3. The highly reducing PKS dmxL2 manufactures butyrate, which is further carboxylated by dmxL1 to form ethylmalonate. It is not yet clear whether the carboxylation occurs while the butyrate is attached to the ACP of dmxL2, but this unusual fungal metabolite could then be esterified to O-5 by the O-acetyltransferase dmxR13. Finally, dimerization performed by dmxR5 gives the observed dimers cryptosporioptides A, B and C as the final products of the pathway. In Cryptosporiopsis sp. (strain 8999), this protein is Short chain dehydrogenase/reductase dmxR8.